A 179-amino-acid chain; its full sequence is Large ribosomal subunit protein uL6 (179 aa).

The protein belongs to the universal ribosomal protein uL6 family. In terms of assembly, part of the 50S ribosomal subunit.

Functionally, this protein binds to the 23S rRNA, and is important in its secondary structure. It is located near the subunit interface in the base of the L7/L12 stalk, and near the tRNA binding site of the peptidyltransferase center. The polypeptide is Large ribosomal subunit protein uL6 (Crocosphaera subtropica (strain ATCC 51142 / BH68) (Cyanothece sp. (strain ATCC 51142))).